Reading from the N-terminus, the 200-residue chain is Large ribosomal subunit protein uL4 (200 aa).

The disordered stretch occupies residues 38-80 (GRQGSKQQKTRSDVSGGGKRPWRQKGTGRARAGTTRGPIWRGG).

Belongs to the universal ribosomal protein uL4 family. As to quaternary structure, part of the 50S ribosomal subunit.

Functionally, one of the primary rRNA binding proteins, this protein initially binds near the 5'-end of the 23S rRNA. It is important during the early stages of 50S assembly. It makes multiple contacts with different domains of the 23S rRNA in the assembled 50S subunit and ribosome. Its function is as follows. Forms part of the polypeptide exit tunnel. The sequence is that of Large ribosomal subunit protein uL4 from Stutzerimonas stutzeri (strain A1501) (Pseudomonas stutzeri).